The chain runs to 89 residues: Small ribosomal subunit protein uS15 (89 aa).

This sequence belongs to the universal ribosomal protein uS15 family. In terms of assembly, part of the 30S ribosomal subunit. Forms a bridge to the 50S subunit in the 70S ribosome, contacting the 23S rRNA.

Its function is as follows. One of the primary rRNA binding proteins, it binds directly to 16S rRNA where it helps nucleate assembly of the platform of the 30S subunit by binding and bridging several RNA helices of the 16S rRNA. In terms of biological role, forms an intersubunit bridge (bridge B4) with the 23S rRNA of the 50S subunit in the ribosome. The chain is Small ribosomal subunit protein uS15 from Prochlorococcus marinus (strain MIT 9515).